Here is a 216-residue protein sequence, read N- to C-terminus: Large ribosomal subunit protein uL1 (216 aa).

The protein belongs to the universal ribosomal protein uL1 family. In terms of assembly, part of the 50S ribosomal subunit.

In terms of biological role, binds directly to 23S rRNA. Probably involved in E site tRNA release. Functionally, protein L1 is also a translational repressor protein, it controls the translation of its operon by binding to its mRNA. The polypeptide is Large ribosomal subunit protein uL1 (Thermococcus kodakarensis (strain ATCC BAA-918 / JCM 12380 / KOD1) (Pyrococcus kodakaraensis (strain KOD1))).